We begin with the raw amino-acid sequence, 701 residues long: Aryl hydrocarbon receptor repressor (701 aa).

Residues T25–K78 form the bHLH domain. One can recognise a PAS domain in the interval P106 to P176. Polar residues predominate over residues T409–S430. Residues T409 to C432 form a disordered region. The tract at residues A555–P701 is needed for transcriptional repression. Residues K583 and K660 each participate in a glycyl lysine isopeptide (Lys-Gly) (interchain with G-Cter in SUMO2) cross-link.

In terms of assembly, interacts with ARNT, ANKRA2, HDAC4 and HDAC5. Interacts with ARNT; forms a heterodimer with ARNT.

The protein localises to the cytoplasm. It is found in the nucleus. In terms of biological role, mediates dioxin toxicity and is involved in regulation of cell growth and differentiation. Represses the transcription activity of AHR by competing with this transcription factor for heterodimer formation with the ARNT and subsequently binding to the xenobiotic response element (XRE) sequence present in the promoter regulatory region of variety of genes. Represses CYP1A1 by binding the XRE sequence and recruiting ANKRA2, HDAC4 and/or HDAC5. Autoregulates its expression by associating with its own XRE site. The protein is Aryl hydrocarbon receptor repressor (Ahrr) of Mus musculus (Mouse).